Here is a 208-residue protein sequence, read N- to C-terminus: Small ribosomal subunit protein uS4 (208 aa).

The region spanning 98-161 (RRLDNVVYRM…KSNPQVVRAM (64 aa)) is the S4 RNA-binding domain.

This sequence belongs to the universal ribosomal protein uS4 family. Part of the 30S ribosomal subunit. Contacts protein S5. The interaction surface between S4 and S5 is involved in control of translational fidelity.

Its function is as follows. One of the primary rRNA binding proteins, it binds directly to 16S rRNA where it nucleates assembly of the body of the 30S subunit. With S5 and S12 plays an important role in translational accuracy. The chain is Small ribosomal subunit protein uS4 from Helicobacter acinonychis (strain Sheeba).